We begin with the raw amino-acid sequence, 169 residues long: Large ribosomal subunit protein uL5 (169 aa).

The protein belongs to the universal ribosomal protein uL5 family. In terms of assembly, part of the 50S ribosomal subunit; contacts the 5S rRNA and probably tRNA. Forms a bridge to the 30S subunit in the 70S ribosome.

This is one of the proteins that bind and probably mediate the attachment of the 5S RNA into the large ribosomal subunit, where it forms part of the central protuberance. In the 70S ribosome it contacts protein S13 of the 30S subunit (bridge B1b), connecting the 2 subunits; this bridge is implicated in subunit movement. May contact the P site tRNA; the 5S rRNA and some of its associated proteins might help stabilize positioning of ribosome-bound tRNAs. This is Large ribosomal subunit protein uL5 from Nanoarchaeum equitans (strain Kin4-M).